A 242-amino-acid polypeptide reads, in one-letter code: uncharacterized protein (242 aa).

This is an uncharacterized protein from Aquifex aeolicus (strain VF5).